We begin with the raw amino-acid sequence, 396 residues long: Elongation factor Tu (396 aa).

In terms of domain architecture, tr-type G spans 10–206 (KPHVNIGTIG…AVDNYIPEPE (197 aa)). The G1 stretch occupies residues 19 to 26 (GHVDHGKT). 19–26 (GHVDHGKT) contributes to the GTP binding site. Position 26 (T26) interacts with Mg(2+). The interval 60 to 64 (GITIA) is G2. Residues 81–84 (DCPG) form a G3 region. Residues 81–85 (DCPGH) and 136–139 (NKAD) contribute to the GTP site. The G4 stretch occupies residues 136–139 (NKAD). The tract at residues 174-176 (SAL) is G5.

The protein belongs to the TRAFAC class translation factor GTPase superfamily. Classic translation factor GTPase family. EF-Tu/EF-1A subfamily. Monomer.

The protein localises to the cytoplasm. The enzyme catalyses GTP + H2O = GDP + phosphate + H(+). GTP hydrolase that promotes the GTP-dependent binding of aminoacyl-tRNA to the A-site of ribosomes during protein biosynthesis. The protein is Elongation factor Tu of Geobacter sulfurreducens (strain ATCC 51573 / DSM 12127 / PCA).